The sequence spans 77 residues: Putative sulfur carrier protein AF_0188 (77 aa).

The active-site Cysteine persulfide intermediate is Cys-11.

It belongs to the sulfur carrier protein TusA family.

This is Putative sulfur carrier protein AF_0188 from Archaeoglobus fulgidus (strain ATCC 49558 / DSM 4304 / JCM 9628 / NBRC 100126 / VC-16).